The following is a 298-amino-acid chain: PYK10-binding protein 1 (298 aa).

N-acetylalanine is present on Ala-2. Jacalin-type lectin domains follow at residues 2–142 (AQKV…YFAP) and 152–295 (AKQL…HVRP). At Ser-20 the chain carries Phosphoserine.

The protein belongs to the jacalin lectin family. Component of the PYK10 complex, at least composed of PYK10/BGLU23, BGLU21, BGLU22, JAL22, JAL23, PBP1/JAL30, PBP2/JAL31, JAL32, JAL33, JAL34, JAL35, GLL22 and GLL23. In terms of tissue distribution, expressed exclusively in roots.

The protein resides in the cytoplasm. Its function is as follows. Inhibitor-type lectin that may regulate the correct polymerization of BGLU23/PYK10 upon tissue damage. Activates BGLU21, BGLU22 and BGLU23. In Arabidopsis thaliana (Mouse-ear cress), this protein is PYK10-binding protein 1 (PBP1).